The chain runs to 298 residues: Tyrosine recombinase XerC (298 aa).

The Core-binding (CB) domain maps to 1–84; it reads MNHIQDAFLN…TLRTFYEYWM (84 aa). A Tyr recombinase domain is found at 105-286; the sequence is YLPQFFYEEE…SNQQLRKVYL (182 aa). Residues arginine 145, lysine 169, histidine 238, arginine 241, and histidine 264 contribute to the active site. The active-site O-(3'-phospho-DNA)-tyrosine intermediate is the tyrosine 273.

This sequence belongs to the 'phage' integrase family. XerC subfamily. As to quaternary structure, forms a cyclic heterotetrameric complex composed of two molecules of XerC and two molecules of XerD.

It localises to the cytoplasm. Site-specific tyrosine recombinase, which acts by catalyzing the cutting and rejoining of the recombining DNA molecules. The XerC-XerD complex is essential to convert dimers of the bacterial chromosome into monomers to permit their segregation at cell division. It also contributes to the segregational stability of plasmids. In Staphylococcus aureus (strain USA300), this protein is Tyrosine recombinase XerC.